The sequence spans 185 residues: uncharacterized protein (185 aa).

The next 5 membrane-spanning stretches (helical) occupy residues Thr-4 to Ile-24, Leu-54 to Ile-74, Leu-98 to Asn-118, Val-119 to Tyr-139, and Phe-153 to Ile-173.

The protein resides in the cell membrane. This is an uncharacterized protein from Bacillus subtilis (strain 168).